The primary structure comprises 250 residues: AA9 family lytic polysaccharide monooxygenase B (250 aa).

The N-terminal stretch at 1-21 (MTLSKITSIAGLLASASLVAG) is a signal peptide. The Cu(2+) site is built by histidine 22 and histidine 107. The residue at position 22 (histidine 22) is a Methylhistidine. 2 disulfide bridges follow: cysteine 77-cysteine 199 and cysteine 118-cysteine 122. A glycan (N-linked (GlcNAc...) asparagine) is linked at asparagine 159. Positions 185 and 194 each coordinate O2. Position 196 (tyrosine 196) interacts with Cu(2+).

This sequence belongs to the polysaccharide monooxygenase AA9 family. Cu(2+) serves as cofactor. In terms of processing, the catalytically essential N-terminal histidine His-22 is post-translationally modified by methylation to prevent protonation of the histidine side chain, and protect the critical active site of the enzyme from oxidative damage.

The protein localises to the secreted. The enzyme catalyses [(1-&gt;4)-beta-D-glucosyl]n+m + reduced acceptor + O2 = 4-dehydro-beta-D-glucosyl-[(1-&gt;4)-beta-D-glucosyl]n-1 + [(1-&gt;4)-beta-D-glucosyl]m + acceptor + H2O.. In terms of biological role, lytic polysaccharide monooxygenase (LPMO) that depolymerizes crystalline and amorphous polysaccharides via the oxidation of scissile alpha- or beta-(1-4)-glycosidic bonds, yielding C1 and C4 oxidation products. Catalysis by LPMOs requires the reduction of the active-site copper from Cu(II) to Cu(I) by a reducing agent and H(2)O(2) or O(2) as a cosubstrate. Shows activity on phosphoric acid swollen cellulose, on NaOH pretreated soy spent flakes as well as on crystalline cellulose (Avicel). Does not have a positive effect on cel6A activity, but acts synergistically with endoglucanase egl7. This is AA9 family lytic polysaccharide monooxygenase B from Aspergillus fumigatus (strain ATCC MYA-4609 / CBS 101355 / FGSC A1100 / Af293) (Neosartorya fumigata).